We begin with the raw amino-acid sequence, 400 residues long: S-adenosylmethionine synthase (400 aa).

His15 is a binding site for ATP. Asp17 lines the Mg(2+) pocket. Position 43 (Glu43) interacts with K(+). Glu56 and Gln99 together coordinate L-methionine. The flexible loop stretch occupies residues 99-109 (QSLEIGAGVDT). Residues 174–176 (DGK), Asp254, 260–261 (RK), Ala277, and Lys281 each bind ATP. Asp254 lines the L-methionine pocket. Lys285 lines the L-methionine pocket.

This sequence belongs to the AdoMet synthase family. Homotetramer; dimer of dimers. Requires Mg(2+) as cofactor. K(+) serves as cofactor.

The protein localises to the cytoplasm. The catalysed reaction is L-methionine + ATP + H2O = S-adenosyl-L-methionine + phosphate + diphosphate. The protein operates within amino-acid biosynthesis; S-adenosyl-L-methionine biosynthesis; S-adenosyl-L-methionine from L-methionine: step 1/1. Functionally, catalyzes the formation of S-adenosylmethionine (AdoMet) from methionine and ATP. The overall synthetic reaction is composed of two sequential steps, AdoMet formation and the subsequent tripolyphosphate hydrolysis which occurs prior to release of AdoMet from the enzyme. In Corynebacterium kroppenstedtii (strain DSM 44385 / JCM 11950 / CIP 105744 / CCUG 35717), this protein is S-adenosylmethionine synthase.